A 398-amino-acid polypeptide reads, in one-letter code: Palmitoyl-[acyl-carrier-protein] 4-desaturase 3, chloroplastic (398 aa).

The N-terminal 29 residues, 1 to 29 (MALRSLFLPNAFPNASSFRGGSRRGAAPR), are a transit peptide targeting the chloroplast. Positions 139, 177, 180, 230, 263, and 266 each coordinate Fe cation.

It belongs to the fatty acid desaturase type 2 family. In terms of assembly, homodimer. The cofactor is Fe(2+). In terms of tissue distribution, preferentially expressed in the flower labellum. Low expression in leaves.

The protein localises to the plastid. Its subcellular location is the chloroplast stroma. It catalyses the reaction hexadecanoyl-[ACP] + 2 reduced [2Fe-2S]-[ferredoxin] + O2 + 2 H(+) = (4Z)-hexadecenoyl-[ACP] + 2 oxidized [2Fe-2S]-[ferredoxin] + 2 H2O. Its pathway is lipid metabolism; fatty acid metabolism. Its function is as follows. Converts palmitoyl-ACP to (4Z)-hexadec-4-enoyl-ACP by introduction of a cis double bond between carbons 4 and 5 of the acyl chain. The protein is Palmitoyl-[acyl-carrier-protein] 4-desaturase 3, chloroplastic (SAD3) of Ophrys arachnitiformis subsp. archipelagi (Orchid).